The chain runs to 222 residues: Ribosomal RNA large subunit methyltransferase E (222 aa).

Residues G64, W66, D92, D108, and D133 each contribute to the S-adenosyl-L-methionine site. Residue K173 is the Proton acceptor of the active site.

The protein belongs to the class I-like SAM-binding methyltransferase superfamily. RNA methyltransferase RlmE family.

The protein localises to the cytoplasm. The enzyme catalyses uridine(2552) in 23S rRNA + S-adenosyl-L-methionine = 2'-O-methyluridine(2552) in 23S rRNA + S-adenosyl-L-homocysteine + H(+). Its function is as follows. Specifically methylates the uridine in position 2552 of 23S rRNA at the 2'-O position of the ribose in the fully assembled 50S ribosomal subunit. The sequence is that of Ribosomal RNA large subunit methyltransferase E from Variovorax paradoxus (strain S110).